Here is a 135-residue protein sequence, read N- to C-terminus: UPF0102 protein RPC_0320 (135 aa).

This sequence belongs to the UPF0102 family.

The chain is UPF0102 protein RPC_0320 from Rhodopseudomonas palustris (strain BisB18).